The following is a 304-amino-acid chain: Ribosomal RNA small subunit methyltransferase H (304 aa).

Residues 37-39 (GGH), Asp-57, Phe-79, Asp-100, and His-107 contribute to the S-adenosyl-L-methionine site.

This sequence belongs to the methyltransferase superfamily. RsmH family.

Its subcellular location is the cytoplasm. It carries out the reaction cytidine(1402) in 16S rRNA + S-adenosyl-L-methionine = N(4)-methylcytidine(1402) in 16S rRNA + S-adenosyl-L-homocysteine + H(+). Functionally, specifically methylates the N4 position of cytidine in position 1402 (C1402) of 16S rRNA. The polypeptide is Ribosomal RNA small subunit methyltransferase H (Bacteroides fragilis (strain YCH46)).